The following is a 100-amino-acid chain: Small ribosomal subunit protein uS14c (100 aa).

Belongs to the universal ribosomal protein uS14 family. As to quaternary structure, part of the 30S ribosomal subunit.

It is found in the plastid. It localises to the chloroplast. Binds 16S rRNA, required for the assembly of 30S particles. This Oenothera argillicola (Appalachian evening primrose) protein is Small ribosomal subunit protein uS14c.